The chain runs to 667 residues: Fermitin family homolog 3 (667 aa).

Position 8 is a phosphoserine (Ser-8). Residue Tyr-11 is modified to Phosphotyrosine. In terms of domain architecture, FERM spans 229–558 (WLDSSRCLMQ…SLPDFGISYV (330 aa)). The 104-residue stretch at 354–457 (DHLRIFRIPR…WMAGCRLASK (104 aa)) folds into the PH domain. A Phosphotyrosine modification is found at Tyr-504. Phosphothreonine is present on Thr-591.

The protein belongs to the kindlin family. As to quaternary structure, interacts with ITGB1, ITGB2 and ITGB3 (via cytoplasmic tails). Highly expressed in lymph node. Expressed in thymus, spleen and leukocytes. Weakly expressed in placenta, small intestine, stomach, testis and lung. Overexpressed in B-cell malignancies.

Its subcellular location is the cell projection. It localises to the podosome. Plays a central role in cell adhesion in hematopoietic cells. Acts by activating the integrin beta-1-3 (ITGB1, ITGB2 and ITGB3). Required for integrin-mediated platelet adhesion and leukocyte adhesion to endothelial cells. Required for activation of integrin beta-2 (ITGB2) in polymorphonuclear granulocytes (PMNs). Functionally, isoform 2 may act as a repressor of NF-kappa-B and apoptosis. This is Fermitin family homolog 3 (FERMT3) from Homo sapiens (Human).